Consider the following 265-residue polypeptide: Gap junction beta-4 protein (265 aa).

An intramembrane segment occupies 2-13 (NWGFLQGILSGV). Residues 14 to 20 (NKYSTAL) are Cytoplasmic-facing. The helical transmembrane segment at 21 to 40 (GRIWLSVVFIFRVLVYVVAA) threads the bilayer. Topologically, residues 41–73 (EEVWDDEQKDFICNTKQPGCPNVCYDEFFPVSH) are extracellular. Intrachain disulfides connect Cys53–Cys175, Cys60–Cys169, and Cys64–Cys164. A helical transmembrane segment spans residues 74–94 (VRLWALQLILVTCPSLLVVMH). The Cytoplasmic segment spans residues 95–130 (VAYREERERKHRLKHGPDAPALYSNLSKKRGGLWWT). Residues 131 to 151 (YLLSLIFKAAVDSGFLYIFHC) traverse the membrane as a helical segment. Topologically, residues 152–184 (IYKDYDMPRVVACSVQPCPHTVDCYISRPTEKK) are extracellular. The chain crosses the membrane as a helical span at residues 185-205 (VFTYFMVVTAAICILLNLSEV). Over 206 to 265 (AYLVGKRCMEVFRPRRQKTSRRHQLPDTCPPYVISKGHPQDESTVLTKAGMATVDAGVYP) the chain is Cytoplasmic.

Belongs to the connexin family. Beta-type (group I) subfamily. In terms of assembly, a hemichannel or connexon is composed of a hexamer of connexins. A functional gap junction is formed by the apposition of two hemichannels. Forms heteromeric channels with GJB2. Detected in adult heart, kidney, skin and cochlea, where it is detected in spiral ganglion, stria vascularis, spiral limbus and spiral ligament (at protein level).

The protein localises to the cell membrane. It localises to the cell junction. It is found in the gap junction. Structural component of gap junctions. Gap junctions are dodecameric channels that connect the cytoplasm of adjoining cells. They are formed by the docking of two hexameric hemichannels, one from each cell membrane. Small molecules and ions diffuse from one cell to a neighboring cell via the central pore. The polypeptide is Gap junction beta-4 protein (Gjb4) (Rattus norvegicus (Rat)).